Reading from the N-terminus, the 353-residue chain is Glutamine synthetase nodule isozyme (353 aa).

Residues 19-99 (IIAEYIWVGG…VMCDTYTPAG (81 aa)) enclose the GS beta-grasp domain. The 248-residue stretch at 106 to 353 (KRHAAAKIFS…TSMIAETTLL (248 aa)) folds into the GS catalytic domain.

This sequence belongs to the glutamine synthetase family. In terms of assembly, homooctamer.

It localises to the cytoplasm. The catalysed reaction is L-glutamate + NH4(+) + ATP = L-glutamine + ADP + phosphate + H(+). The polypeptide is Glutamine synthetase nodule isozyme (Lupinus luteus (European yellow lupine)).